Reading from the N-terminus, the 101-residue chain is Small ribosomal subunit protein uS14 (101 aa).

The protein belongs to the universal ribosomal protein uS14 family. In terms of assembly, part of the 30S ribosomal subunit. Contacts proteins S3 and S10.

Functionally, binds 16S rRNA, required for the assembly of 30S particles and may also be responsible for determining the conformation of the 16S rRNA at the A site. This chain is Small ribosomal subunit protein uS14, found in Alteromonas mediterranea (strain DSM 17117 / CIP 110805 / LMG 28347 / Deep ecotype).